A 384-amino-acid chain; its full sequence is Flap endonuclease 1 (384 aa).

The N-domain stretch occupies residues methionine 1 to arginine 105. Aspartate 34 contacts Mg(2+). Arginine 71 contacts DNA. Mg(2+) contacts are provided by aspartate 87, glutamate 159, glutamate 161, aspartate 180, and aspartate 182. Residues glutamate 123–histidine 254 are I-domain. Glutamate 159 contacts DNA. The DNA site is built by glycine 232 and aspartate 234. Residue aspartate 234 participates in Mg(2+) binding. Residues valine 338–isoleucine 346 are interaction with PCNA. Residues isoleucine 349–lysine 384 form a disordered region. Residues lysine 364–lysine 384 show a composition bias toward low complexity.

The protein belongs to the XPG/RAD2 endonuclease family. FEN1 subfamily. Interacts with PCNA. Three molecules of repg bind to one PCNA trimer with each molecule binding to one PCNA monomer. PCNA stimulates the nuclease activity without altering cleavage specificity. Mg(2+) serves as cofactor. In terms of processing, phosphorylated. Phosphorylation upon DNA damage induces relocalization to the nuclear plasma.

It is found in the nucleus. Its subcellular location is the nucleolus. The protein resides in the nucleoplasm. The protein localises to the mitochondrion. Structure-specific nuclease with 5'-flap endonuclease and 5'-3' exonuclease activities involved in DNA replication and repair. During DNA replication, cleaves the 5'-overhanging flap structure that is generated by displacement synthesis when DNA polymerase encounters the 5'-end of a downstream Okazaki fragment. It enters the flap from the 5'-end and then tracks to cleave the flap base, leaving a nick for ligation. Also involved in the long patch base excision repair (LP-BER) pathway, by cleaving within the apurinic/apyrimidinic (AP) site-terminated flap. Acts as a genome stabilization factor that prevents flaps from equilibrating into structures that lead to duplications and deletions. Also possesses 5'-3' exonuclease activity on nicked or gapped double-stranded DNA, and exhibits RNase H activity. Also involved in replication and repair of rDNA and in repairing mitochondrial DNA. The sequence is that of Flap endonuclease 1 from Dictyostelium discoideum (Social amoeba).